A 173-amino-acid polypeptide reads, in one-letter code: Photosystem I assembly protein Ycf3 (173 aa).

TPR repeat units lie at residues 35–68 (AFSY…EIDP), 72–105 (SYIL…NPSL), and 120–153 (GEQA…APNS).

Belongs to the Ycf3 family.

It is found in the plastid. Its subcellular location is the chloroplast thylakoid membrane. Essential for the assembly of the photosystem I (PSI) complex. May act as a chaperone-like factor to guide the assembly of the PSI subunits. This Mesostigma viride (Green alga) protein is Photosystem I assembly protein Ycf3.